Reading from the N-terminus, the 108-residue chain is uncharacterized protein (108 aa).

The span at 1–12 shows a compositional bias: polar residues; it reads MSNQQKQLQLPS. The segment at 1 to 22 is disordered; that stretch reads MSNQQKQLQLPSASIKKPKEKQ.

This is an uncharacterized protein from Dictyostelium discoideum (Social amoeba).